Reading from the N-terminus, the 184-residue chain is ATP synthase subunit b, chloroplastic (184 aa).

The chain crosses the membrane as a helical span at residues Ile-26–Val-48.

The protein belongs to the ATPase B chain family. F-type ATPases have 2 components, F(1) - the catalytic core - and F(0) - the membrane proton channel. F(1) has five subunits: alpha(3), beta(3), gamma(1), delta(1), epsilon(1). F(0) has four main subunits: a(1), b(1), b'(1) and c(10-14). The alpha and beta chains form an alternating ring which encloses part of the gamma chain. F(1) is attached to F(0) by a central stalk formed by the gamma and epsilon chains, while a peripheral stalk is formed by the delta, b and b' chains.

Its subcellular location is the plastid. It is found in the chloroplast thylakoid membrane. F(1)F(0) ATP synthase produces ATP from ADP in the presence of a proton or sodium gradient. F-type ATPases consist of two structural domains, F(1) containing the extramembraneous catalytic core and F(0) containing the membrane proton channel, linked together by a central stalk and a peripheral stalk. During catalysis, ATP synthesis in the catalytic domain of F(1) is coupled via a rotary mechanism of the central stalk subunits to proton translocation. In terms of biological role, component of the F(0) channel, it forms part of the peripheral stalk, linking F(1) to F(0). The sequence is that of ATP synthase subunit b, chloroplastic from Acorus calamus (Sweet flag).